The chain runs to 165 residues: Endoribonuclease YbeY (165 aa).

Residues His-119, His-123, and His-129 each coordinate Zn(2+).

Belongs to the endoribonuclease YbeY family. Requires Zn(2+) as cofactor.

The protein resides in the cytoplasm. Its function is as follows. Single strand-specific metallo-endoribonuclease involved in late-stage 70S ribosome quality control and in maturation of the 3' terminus of the 16S rRNA. The chain is Endoribonuclease YbeY from Streptomyces coelicolor (strain ATCC BAA-471 / A3(2) / M145).